A 134-amino-acid chain; its full sequence is MSNTETANPTAKAVARHVRVTPMKARRVVDLVRGRSVEDALNILKFAPQAASEPVAKVIASAAANAENNLDLDPSTLVVATAFVDEGATLKRFQPRAQGRAFRIRKRTSHITVIVESLPKTGTSTRNRRKGSAQ.

This sequence belongs to the universal ribosomal protein uL22 family. In terms of assembly, part of the 50S ribosomal subunit.

Functionally, this protein binds specifically to 23S rRNA; its binding is stimulated by other ribosomal proteins, e.g. L4, L17, and L20. It is important during the early stages of 50S assembly. It makes multiple contacts with different domains of the 23S rRNA in the assembled 50S subunit and ribosome. Its function is as follows. The globular domain of the protein is located near the polypeptide exit tunnel on the outside of the subunit, while an extended beta-hairpin is found that lines the wall of the exit tunnel in the center of the 70S ribosome. This is Large ribosomal subunit protein uL22 from Rhodococcus jostii (strain RHA1).